We begin with the raw amino-acid sequence, 261 residues long: Glutathione S-transferase theta-1 (261 aa).

The GST N-terminal domain occupies 2 to 101; sequence GLELYLDLLS…YLSRKYNTPD (100 aa). Glutathione contacts are provided by residues 72-73 and 85-86; these read KV and EC. In terms of domain architecture, GST C-terminal spans 107–248; that stretch reads DIKKRAQVDE…LSNIQIDPQL (142 aa).

The protein belongs to the GST superfamily. Theta family. In terms of assembly, homodimer.

It localises to the cytoplasm. The catalysed reaction is RX + glutathione = an S-substituted glutathione + a halide anion + H(+). Functionally, conjugation of reduced glutathione to a wide number of exogenous and endogenous hydrophobic electrophiles. The protein is Glutathione S-transferase theta-1 (GSTT1) of Gallus gallus (Chicken).